Consider the following 375-residue polypeptide: Succinyl-diaminopimelate desuccinylase (375 aa).

Residue histidine 66 participates in Zn(2+) binding. The active site involves aspartate 68. Aspartate 99 is a binding site for Zn(2+). Glutamate 133 serves as the catalytic Proton acceptor. 3 residues coordinate Zn(2+): glutamate 134, glutamate 162, and histidine 348.

This sequence belongs to the peptidase M20A family. DapE subfamily. Homodimer. Zn(2+) serves as cofactor. Requires Co(2+) as cofactor.

The enzyme catalyses N-succinyl-(2S,6S)-2,6-diaminopimelate + H2O = (2S,6S)-2,6-diaminopimelate + succinate. It functions in the pathway amino-acid biosynthesis; L-lysine biosynthesis via DAP pathway; LL-2,6-diaminopimelate from (S)-tetrahydrodipicolinate (succinylase route): step 3/3. Catalyzes the hydrolysis of N-succinyl-L,L-diaminopimelic acid (SDAP), forming succinate and LL-2,6-diaminopimelate (DAP), an intermediate involved in the bacterial biosynthesis of lysine and meso-diaminopimelic acid, an essential component of bacterial cell walls. This is Succinyl-diaminopimelate desuccinylase from Yersinia pestis bv. Antiqua (strain Antiqua).